The sequence spans 518 residues: MAASIVRRLGPLVAGRGLRLRGGCVCNQSFKRSFATERQDRNLLYEHAREGYSALPLLDMESLCAYPEDAARALDLRKGELRSKDLPGIISTWQELRQLREQIRSLEEEKEAVTEAVRALVVNQDNSQVQQDPQYQSLRARGREIRKQLTLLYPKEAQLEEQFYLRALRLPNQTHPDVPVGDESQARVLHVVGDKPAFSFQPRGHLEIAEKLDIIRQKRLSHVSGHRSYYLRGAGALLQHGLVNFTLNKLIHRGFTPMTVPDLLRGVVFEGCGMTPNAKPSQIYNIDPSRFEDLNLAGTAEVGLAGYFMDHSVAFRDLPIRMVCSSTCYRAETDTGKEPWGLYRVHHFTKVEMFGVTGPGLEQSSELLEEFLSLQMEILTELGLHFRVLDMPTQELGLPAYRKFDIEAWMPGRGRFGEVTSASNCTDFQSRRLHIMFQTEAGELQFAHTVNATGCAVPRLLIALLESYQQKDGSVLVPPALQPYLGTDRITTPTHVPLQYIGPNQPQKPRLPGQPASS.

The transit peptide at 1 to 34 (MAASIVRRLGPLVAGRGLRLRGGCVCNQSFKRSF) directs the protein to the mitochondrion. Lys-110 carries the post-translational modification N6-acetyllysine. Lys-195 carries the N6-succinyllysine modification. 299–301 (TAE) contacts L-serine. Residue 330–332 (RAE) coordinates ATP. N6-succinyllysine is present on Lys-337. Val-345 is a binding site for ATP. Position 352 (Glu-352) interacts with L-serine. 418–421 (EVTS) provides a ligand contact to ATP. Residue Thr-453 coordinates L-serine. Residues 497-518 (PLQYIGPNQPQKPRLPGQPASS) are disordered.

The protein belongs to the class-II aminoacyl-tRNA synthetase family. Type-1 seryl-tRNA synthetase subfamily. In terms of assembly, homodimer. The tRNA molecule probably binds across the dimer. In terms of processing, two N-termini starting at positions 35 and 37 have been identified by direct sequencing.

It is found in the mitochondrion matrix. The enzyme catalyses tRNA(Ser) + L-serine + ATP = L-seryl-tRNA(Ser) + AMP + diphosphate + H(+). It catalyses the reaction tRNA(Sec) + L-serine + ATP = L-seryl-tRNA(Sec) + AMP + diphosphate + H(+). It participates in aminoacyl-tRNA biosynthesis; selenocysteinyl-tRNA(Sec) biosynthesis; L-seryl-tRNA(Sec) from L-serine and tRNA(Sec): step 1/1. In terms of biological role, catalyzes the attachment of serine to tRNA(Ser). Is also probably able to aminoacylate tRNA(Sec) with serine, to form the misacylated tRNA L-seryl-tRNA(Sec), which will be further converted into selenocysteinyl-tRNA(Sec). The protein is Serine--tRNA ligase, mitochondrial (SARS2) of Bos taurus (Bovine).